We begin with the raw amino-acid sequence, 263 residues long: Tryptophan synthase alpha chain (263 aa).

Catalysis depends on proton acceptor residues glutamate 49 and aspartate 60.

The protein belongs to the TrpA family. As to quaternary structure, tetramer of two alpha and two beta chains.

The catalysed reaction is (1S,2R)-1-C-(indol-3-yl)glycerol 3-phosphate + L-serine = D-glyceraldehyde 3-phosphate + L-tryptophan + H2O. It functions in the pathway amino-acid biosynthesis; L-tryptophan biosynthesis; L-tryptophan from chorismate: step 5/5. Its function is as follows. The alpha subunit is responsible for the aldol cleavage of indoleglycerol phosphate to indole and glyceraldehyde 3-phosphate. In Roseobacter denitrificans (strain ATCC 33942 / OCh 114) (Erythrobacter sp. (strain OCh 114)), this protein is Tryptophan synthase alpha chain.